The primary structure comprises 223 residues: Large ribosomal subunit protein uL4 (223 aa).

Residues 47–72 (GTASTKTRGEVAGGGRKPWPQKHTGR) are disordered.

Belongs to the universal ribosomal protein uL4 family. Part of the 50S ribosomal subunit.

In terms of biological role, one of the primary rRNA binding proteins, this protein initially binds near the 5'-end of the 23S rRNA. It is important during the early stages of 50S assembly. It makes multiple contacts with different domains of the 23S rRNA in the assembled 50S subunit and ribosome. Functionally, forms part of the polypeptide exit tunnel. The polypeptide is Large ribosomal subunit protein uL4 (Fervidobacterium nodosum (strain ATCC 35602 / DSM 5306 / Rt17-B1)).